Consider the following 497-residue polypeptide: MQLQTVPTAIPDWSGDLLAIAVFQTEGTLTLTDPYTTLDQRLNGLLQELINEGEFQGKSGTSLLMRLLPNFPLKKLLLVGLGNREDFNLEALRRTAATIARTARRERAKTLGMALPHETLEAADAAQAIAEGVILALHSDVRFKTDPEARKLLPYPEVVTLLGLGEQTAALTRAQQICDGVILARELVNAPANEVTPVTLAETAQQLAATYGLTAKILEREDCGALGMGAFLGVAQASDLPPKFIHLTYTSPGTVHRKIALVGKGLTFDSGGLNLKTQGGIETMKMDMGGAAAVLGTAKVLGQLKPPGIEVHFIIAATENMISGRALHPGDILTASNGKTIEVNNTDAEGRLTLADALVYAEKLGVDAIVDLATLTGACIVALGDNIAGLWSNNAELAQALQKASDRCGEKFWQMPLENKYFEAMKSQVADMKNTGPRSAGSITAALFLQQFVDHTPWAHLDIAGPVWTEKEDGYNNPCGTGYPVRTLVEWLCSLSS.

Positions 264 and 269 each coordinate Mn(2+). Lysine 276 is an active-site residue. Residues aspartate 287, aspartate 347, and glutamate 349 each contribute to the Mn(2+) site. Arginine 351 is a catalytic residue.

The protein belongs to the peptidase M17 family. It depends on Mn(2+) as a cofactor.

Its subcellular location is the cytoplasm. It carries out the reaction Release of an N-terminal amino acid, Xaa-|-Yaa-, in which Xaa is preferably Leu, but may be other amino acids including Pro although not Arg or Lys, and Yaa may be Pro. Amino acid amides and methyl esters are also readily hydrolyzed, but rates on arylamides are exceedingly low.. The catalysed reaction is Release of an N-terminal amino acid, preferentially leucine, but not glutamic or aspartic acids.. In terms of biological role, presumably involved in the processing and regular turnover of intracellular proteins. Catalyzes the removal of unsubstituted N-terminal amino acids from various peptides. The chain is Probable cytosol aminopeptidase from Thermosynechococcus vestitus (strain NIES-2133 / IAM M-273 / BP-1).